The chain runs to 573 residues: Protein translocase subunit SecD (573 aa).

The helical transmembrane segment at 13 to 33 threads the bilayer; that stretch reads YLSVFLVMLIGIYLLVFFTGD. Positions 127 to 200 are disordered; it reads AQPAAEEPQP…PPAEAPATDP (74 aa). Composition is skewed to pro residues over residues 135–154 and 161–194; these read QPAP…PPPA and SPQP…PPAE. The next 5 helical transmembrane spans lie at 385-405, 410-430, 441-461, 489-509, and 514-534; these read AGMI…LLYY, LLTA…LVLL, AGIA…VVFF, IVSG…LAIG, and FAFT…LVTW.

It belongs to the SecD/SecF family. SecD subfamily. In terms of assembly, forms a complex with SecF. Part of the essential Sec protein translocation apparatus which comprises SecA, SecYEG and auxiliary proteins SecDF. Other proteins may also be involved.

The protein localises to the cell membrane. Its function is as follows. Part of the Sec protein translocase complex. Interacts with the SecYEG preprotein conducting channel. SecDF uses the proton motive force (PMF) to complete protein translocation after the ATP-dependent function of SecA. This is Protein translocase subunit SecD from Mycobacterium tuberculosis (strain CDC 1551 / Oshkosh).